A 255-amino-acid chain; its full sequence is uncharacterized protein (255 aa).

Over residues Met-1–Val-10 the composition is skewed to basic residues. Residues Met-1–Glu-78 are disordered. Over residues Val-44–Gln-61 the composition is skewed to basic and acidic residues.

This is an uncharacterized protein from Arabidopsis thaliana (Mouse-ear cress).